The following is a 290-amino-acid chain: Shikimate dehydrogenase (NADP(+)) (290 aa).

Residues 21 to 23 and threonine 68 each bind shikimate; that span reads SLS. The active-site Proton acceptor is lysine 72. Glutamate 84 serves as a coordination point for NADP(+). Residues asparagine 93 and aspartate 108 each coordinate shikimate. Residues 132–136 and leucine 230 contribute to the NADP(+) site; that span reads GYGGA. Tyrosine 232 lines the shikimate pocket. Residue glycine 253 participates in NADP(+) binding.

The protein belongs to the shikimate dehydrogenase family. In terms of assembly, homodimer.

It catalyses the reaction shikimate + NADP(+) = 3-dehydroshikimate + NADPH + H(+). It participates in metabolic intermediate biosynthesis; chorismate biosynthesis; chorismate from D-erythrose 4-phosphate and phosphoenolpyruvate: step 4/7. Its function is as follows. Involved in the biosynthesis of the chorismate, which leads to the biosynthesis of aromatic amino acids. Catalyzes the reversible NADPH linked reduction of 3-dehydroshikimate (DHSA) to yield shikimate (SA). The chain is Shikimate dehydrogenase (NADP(+)) from Synechocystis sp. (strain ATCC 27184 / PCC 6803 / Kazusa).